Consider the following 194-residue polypeptide: Early growth response protein 1 (194 aa).

3 C2H2-type zinc fingers span residues 1-18 (CDRR…IRIH), 24-46 (FQCR…IRTH), and 52-74 (FACD…TKIH).

It belongs to the EGR C2H2-type zinc-finger protein family.

It localises to the nucleus. Its subcellular location is the cytoplasm. Transcriptional regulator. Recognizes and binds to the DNA sequence 5'-GCG(T/G)GGGCG-3'(EGR-site) in the promoter region of target genes. Binds double-stranded target DNA, irrespective of the cytosine methylation status. Regulates the transcription of numerous target genes, and thereby plays an important role in regulating the response to growth factors, DNA damage, and ischemia. Plays a role in the regulation of cell survival, proliferation and cell death. Mediates responses to ischemia and hypoxia; regulates the expression of proteins that are involved in inflammatory processes. Plays a role in regulating the expression of circadian clock genes. This Gallus gallus (Chicken) protein is Early growth response protein 1 (EGR1).